We begin with the raw amino-acid sequence, 317 residues long: Acetyl-coenzyme A carboxylase carboxyl transferase subunit alpha (317 aa).

In terms of domain architecture, CoA carboxyltransferase C-terminal spans 40 to 293 (LEKRSADALK…GDIITASLRS (254 aa)).

It belongs to the AccA family. As to quaternary structure, acetyl-CoA carboxylase is a heterohexamer composed of biotin carboxyl carrier protein (AccB), biotin carboxylase (AccC) and two subunits each of ACCase subunit alpha (AccA) and ACCase subunit beta (AccD).

The protein resides in the cytoplasm. The enzyme catalyses N(6)-carboxybiotinyl-L-lysyl-[protein] + acetyl-CoA = N(6)-biotinyl-L-lysyl-[protein] + malonyl-CoA. It functions in the pathway lipid metabolism; malonyl-CoA biosynthesis; malonyl-CoA from acetyl-CoA: step 1/1. Its function is as follows. Component of the acetyl coenzyme A carboxylase (ACC) complex. First, biotin carboxylase catalyzes the carboxylation of biotin on its carrier protein (BCCP) and then the CO(2) group is transferred by the carboxyltransferase to acetyl-CoA to form malonyl-CoA. The polypeptide is Acetyl-coenzyme A carboxylase carboxyl transferase subunit alpha (Brucella anthropi (strain ATCC 49188 / DSM 6882 / CCUG 24695 / JCM 21032 / LMG 3331 / NBRC 15819 / NCTC 12168 / Alc 37) (Ochrobactrum anthropi)).